We begin with the raw amino-acid sequence, 403 residues long: Phosphoglycerate kinase (403 aa).

Residues 21–23 (DFN), Arg36, 59–62 (HLGR), Arg118, and Arg151 each bind substrate. Residues Lys202, Glu328, and 354–357 (GGDS) contribute to the ATP site.

Belongs to the phosphoglycerate kinase family. Monomer.

It localises to the cytoplasm. It catalyses the reaction (2R)-3-phosphoglycerate + ATP = (2R)-3-phospho-glyceroyl phosphate + ADP. It participates in carbohydrate degradation; glycolysis; pyruvate from D-glyceraldehyde 3-phosphate: step 2/5. This Akkermansia muciniphila (strain ATCC BAA-835 / DSM 22959 / JCM 33894 / BCRC 81048 / CCUG 64013 / CIP 107961 / Muc) protein is Phosphoglycerate kinase.